Reading from the N-terminus, the 282-residue chain is uncharacterized protein (282 aa).

This sequence belongs to the ycf80 family.

The protein resides in the plastid. The protein localises to the chloroplast. This is an uncharacterized protein from Guillardia theta (Cryptophyte).